Here is a 336-residue protein sequence, read N- to C-terminus: Apyrase (336 aa).

Positions 1 to 21 (MFLKFCVVAFAICLSINLSEG) are cleaved as a signal peptide. An N-linked (GlcNAc...) asparagine glycan is attached at N209.

Belongs to the apyrase family. Ca(2+) is required as a cofactor. Salivary gland (at protein level).

The protein localises to the secreted. The enzyme catalyses a ribonucleoside 5'-triphosphate + 2 H2O = a ribonucleoside 5'-phosphate + 2 phosphate + 2 H(+). Its function is as follows. Facilitates hematophagy by inhibiting ADP- and collagen-dependent platelet aggregation in the host. Cleaves adenosine triphosphate (ATP) and adenosine diphosphate (ADP) to adenosine monophosphate (AMP) and inorganic phosphate in calcium-dependent manner. This Phlebotomus duboscqi (Sandfly) protein is Apyrase.